The following is a 525-amino-acid chain: Chromosomal replication initiator protein DnaA (525 aa).

The segment at 1–71 is domain I, interacts with DnaA modulators; sequence MNDFWQHCSA…ADLAREFWNT (71 aa). The segment at 71–188 is domain II; the sequence is TPIEVQFVLD…AEADSMYERS (118 aa). Residues 160-181 form a disordered region; sequence AAAGRRTWRPGPGAAPANGAEA. The segment covering 169 to 181 has biased composition (low complexity); it reads PGPGAAPANGAEA. Positions 189–405 are domain III, AAA+ region; that stretch reads KLNPVLTFDN…GALRKILAYS (217 aa). Residues Gly-233, Gly-235, Lys-236, and Thr-237 each contribute to the ATP site. The domain IV, binds dsDNA stretch occupies residues 406-525; sequence KFHGREISIE…LHVLEQTLKG (120 aa).

The protein belongs to the DnaA family. In terms of assembly, oligomerizes as a right-handed, spiral filament on DNA at oriC.

Its subcellular location is the cytoplasm. Plays an essential role in the initiation and regulation of chromosomal replication. ATP-DnaA binds to the origin of replication (oriC) to initiate formation of the DNA replication initiation complex once per cell cycle. Binds the DnaA box (a 9 base pair repeat at the origin) and separates the double-stranded (ds)DNA. Forms a right-handed helical filament on oriC DNA; dsDNA binds to the exterior of the filament while single-stranded (ss)DNA is stabiized in the filament's interior. The ATP-DnaA-oriC complex binds and stabilizes one strand of the AT-rich DNA unwinding element (DUE), permitting loading of DNA polymerase. After initiation quickly degrades to an ADP-DnaA complex that is not apt for DNA replication. Binds acidic phospholipids. In Burkholderia vietnamiensis (strain G4 / LMG 22486) (Burkholderia cepacia (strain R1808)), this protein is Chromosomal replication initiator protein DnaA.